Consider the following 211-residue polypeptide: Ribonuclease HII (211 aa).

Positions E11–S200 constitute an RNase H type-2 domain. A divalent metal cation contacts are provided by D17, E18, and D109.

It belongs to the RNase HII family. It depends on Mn(2+) as a cofactor. Requires Mg(2+) as cofactor.

Its subcellular location is the cytoplasm. It carries out the reaction Endonucleolytic cleavage to 5'-phosphomonoester.. In terms of biological role, endonuclease that specifically degrades the RNA of RNA-DNA hybrids. This chain is Ribonuclease HII, found in Histophilus somni (strain 2336) (Haemophilus somnus).